The sequence spans 442 residues: Methionine aminopeptidase 2-1 (442 aa).

Residues 1–92 (MAAQASEELE…ISELFPNNQY (92 aa)) are disordered. Over residues 15-25 (NGQNGHAQEQV) the composition is skewed to polar residues. Positions 30 to 47 (EAADNDDSEDDEKEEEGG) are enriched in acidic residues. Positions 56–72 (AKKKKKRKPKKKKKGGA) are enriched in basic residues. His195 is a binding site for substrate. The a divalent metal cation site is built by Asp215, Asp226, and His295. Position 303 (His303) interacts with substrate. The a divalent metal cation site is built by Glu328 and Glu423.

It belongs to the peptidase M24A family. Methionine aminopeptidase eukaryotic type 2 subfamily. It depends on Co(2+) as a cofactor. Zn(2+) serves as cofactor. Requires Mn(2+) as cofactor. The cofactor is Fe(2+).

The protein resides in the cytoplasm. It catalyses the reaction Release of N-terminal amino acids, preferentially methionine, from peptides and arylamides.. Cotranslationally removes the N-terminal methionine from nascent proteins. The N-terminal methionine is often cleaved when the second residue in the primary sequence is small and uncharged (Met-Ala-, Cys, Gly, Pro, Ser, Thr, or Val). This is Methionine aminopeptidase 2-1 from Talaromyces marneffei (strain ATCC 18224 / CBS 334.59 / QM 7333) (Penicillium marneffei).